Consider the following 874-residue polypeptide: Alanine--tRNA ligase (874 aa).

Residues histidine 563, histidine 567, cysteine 665, and histidine 669 each contribute to the Zn(2+) site.

It belongs to the class-II aminoacyl-tRNA synthetase family. Zn(2+) serves as cofactor.

It localises to the cytoplasm. The enzyme catalyses tRNA(Ala) + L-alanine + ATP = L-alanyl-tRNA(Ala) + AMP + diphosphate. In terms of biological role, catalyzes the attachment of alanine to tRNA(Ala) in a two-step reaction: alanine is first activated by ATP to form Ala-AMP and then transferred to the acceptor end of tRNA(Ala). Also edits incorrectly charged Ser-tRNA(Ala) and Gly-tRNA(Ala) via its editing domain. The polypeptide is Alanine--tRNA ligase (Actinobacillus pleuropneumoniae serotype 7 (strain AP76)).